The chain runs to 482 residues: UDP-N-acetylmuramate--L-alanine ligase (482 aa).

122–128 contributes to the ATP binding site; sequence GTHGKTT.

This sequence belongs to the MurCDEF family.

It localises to the cytoplasm. The catalysed reaction is UDP-N-acetyl-alpha-D-muramate + L-alanine + ATP = UDP-N-acetyl-alpha-D-muramoyl-L-alanine + ADP + phosphate + H(+). Its pathway is cell wall biogenesis; peptidoglycan biosynthesis. Cell wall formation. The sequence is that of UDP-N-acetylmuramate--L-alanine ligase from Mycolicibacterium smegmatis (strain ATCC 700084 / mc(2)155) (Mycobacterium smegmatis).